The primary structure comprises 378 residues: H repeat-associated putative transposase YhhI (378 aa).

The protein belongs to the transposase 11 family.

In Escherichia coli (strain K12), this protein is H repeat-associated putative transposase YhhI (yhhI).